The sequence spans 453 residues: Aldehyde dehydrogenase, dimeric NADP-preferring (453 aa).

Ser-2 bears the N-acetylserine mark. Lys-178 carries the N6-acetyllysine modification. NAD(+) is bound at residue 188 to 193 (GNTAVG). Lys-194 is modified (N6-acetyllysine). Catalysis depends on residues Glu-210 and Cys-244.

This sequence belongs to the aldehyde dehydrogenase family. As to quaternary structure, homodimer.

The protein localises to the cytoplasm. It carries out the reaction an aldehyde + NAD(+) + H2O = a carboxylate + NADH + 2 H(+). It catalyses the reaction octanal + NAD(+) + H2O = octanoate + NADH + 2 H(+). In terms of biological role, ALDHs play a major role in the detoxification of alcohol-derived acetaldehyde. They are involved in the metabolism of corticosteroids, biogenic amines, neurotransmitters, and lipid peroxidation. Oxidizes medium and long chain aldehydes into non-toxic fatty acids. Preferentially oxidizes aromatic aldehyde substrates. Comprises about 50 percent of corneal epithelial soluble proteins. May play a role in preventing corneal damage caused by ultraviolet light. This Canis lupus familiaris (Dog) protein is Aldehyde dehydrogenase, dimeric NADP-preferring (ALDH3A1).